A 380-amino-acid polypeptide reads, in one-letter code: 3-dehydroquinate synthase (380 aa).

NAD(+) is bound by residues 118–122 (GVIGD), 142–143 (TS), Lys-155, and Lys-164. The Zn(2+) site is built by Glu-197, His-259, and His-278.

The protein belongs to the sugar phosphate cyclases superfamily. Dehydroquinate synthase family. The cofactor is Co(2+). It depends on Zn(2+) as a cofactor. NAD(+) is required as a cofactor.

The protein resides in the cytoplasm. The enzyme catalyses 7-phospho-2-dehydro-3-deoxy-D-arabino-heptonate = 3-dehydroquinate + phosphate. The protein operates within metabolic intermediate biosynthesis; chorismate biosynthesis; chorismate from D-erythrose 4-phosphate and phosphoenolpyruvate: step 2/7. In terms of biological role, catalyzes the conversion of 3-deoxy-D-arabino-heptulosonate 7-phosphate (DAHP) to dehydroquinate (DHQ). The chain is 3-dehydroquinate synthase from Sinorhizobium medicae (strain WSM419) (Ensifer medicae).